Reading from the N-terminus, the 505-residue chain is Lysine--tRNA ligase (505 aa).

Glu415 and Glu422 together coordinate Mg(2+).

This sequence belongs to the class-II aminoacyl-tRNA synthetase family. As to quaternary structure, homodimer. It depends on Mg(2+) as a cofactor.

The protein localises to the cytoplasm. It catalyses the reaction tRNA(Lys) + L-lysine + ATP = L-lysyl-tRNA(Lys) + AMP + diphosphate. The protein is Lysine--tRNA ligase of Shigella flexneri.